A 397-amino-acid polypeptide reads, in one-letter code: Phosphoglycerate kinase (397 aa).

Residues 25-27 (DLN), arginine 41, 64-67 (HLGR), arginine 118, and arginine 151 each bind substrate. ATP is bound by residues lysine 202, glutamate 324, and 350-353 (GGDT).

This sequence belongs to the phosphoglycerate kinase family. Monomer.

The protein resides in the cytoplasm. It catalyses the reaction (2R)-3-phosphoglycerate + ATP = (2R)-3-phospho-glyceroyl phosphate + ADP. It functions in the pathway carbohydrate degradation; glycolysis; pyruvate from D-glyceraldehyde 3-phosphate: step 2/5. The protein is Phosphoglycerate kinase of Janthinobacterium sp. (strain Marseille) (Minibacterium massiliensis).